A 211-amino-acid chain; its full sequence is Large ribosomal subunit protein uL4 (211 aa).

The disordered stretch occupies residues 44 to 90; it reads ERQGTHSTLTKGEVRGGGKKPWRQKHTGKARTGSTRNPHWTGGGVVF. Positions 60-72 are enriched in basic residues; that stretch reads GGKKPWRQKHTGK.

It belongs to the universal ribosomal protein uL4 family. In terms of assembly, part of the 50S ribosomal subunit.

Its function is as follows. One of the primary rRNA binding proteins, this protein initially binds near the 5'-end of the 23S rRNA. It is important during the early stages of 50S assembly. It makes multiple contacts with different domains of the 23S rRNA in the assembled 50S subunit and ribosome. In terms of biological role, forms part of the polypeptide exit tunnel. The chain is Large ribosomal subunit protein uL4 from Ureaplasma parvum serovar 3 (strain ATCC 27815 / 27 / NCTC 11736).